The chain runs to 509 residues: ATP synthase subunit alpha (509 aa).

169 to 176 (GDRQTGKT) is an ATP binding site.

This sequence belongs to the ATPase alpha/beta chains family. F-type ATPases have 2 components, CF(1) - the catalytic core - and CF(0) - the membrane proton channel. CF(1) has five subunits: alpha(3), beta(3), gamma(1), delta(1), epsilon(1). CF(0) has three main subunits: a(1), b(2) and c(9-12). The alpha and beta chains form an alternating ring which encloses part of the gamma chain. CF(1) is attached to CF(0) by a central stalk formed by the gamma and epsilon chains, while a peripheral stalk is formed by the delta and b chains.

It localises to the cell inner membrane. It carries out the reaction ATP + H2O + 4 H(+)(in) = ADP + phosphate + 5 H(+)(out). Functionally, produces ATP from ADP in the presence of a proton gradient across the membrane. The alpha chain is a regulatory subunit. In Zymomonas mobilis subsp. mobilis (strain ATCC 31821 / ZM4 / CP4), this protein is ATP synthase subunit alpha.